Reading from the N-terminus, the 241-residue chain is Peroxisomal membrane protein 11C (241 aa).

Residues 1–124 (MASLSGLASA…ARVLHVDSSR (124 aa)) lie on the Cytoplasmic side of the membrane. A helical membrane pass occupies residues 125–149 (WWTLSTTLWALSLLLGVARSLWMLL). Residues 150–211 (KLRQRLRSPT…GVLWAGRFPP (62 aa)) are Lumenal-facing. A helical transmembrane segment spans residues 212–227 (WLVGLMGTISSILSMY). Over 228–241 (QAARAGGQAEATTP) the chain is Cytoplasmic.

Belongs to the peroxin-11 family. As to quaternary structure, homodimer. Heterodimer with either PEX11A or PEX11B. Interacts with FIS1.

The protein resides in the peroxisome membrane. Its function is as follows. Promotes membrane protrusion and elongation on the peroxisomal surface. In Homo sapiens (Human), this protein is Peroxisomal membrane protein 11C (PEX11G).